Here is a 379-residue protein sequence, read N- to C-terminus: Synaptic vesicle membrane protein VAT-1 (379 aa).

S273 is modified (phosphoserine).

The protein belongs to the zinc-containing alcohol dehydrogenase family. Quinone oxidoreductase subfamily. In terms of tissue distribution, cholinergic synaptic vesicles.

It is found in the cytoplasmic vesicle. The protein localises to the secretory vesicle. It localises to the synaptic vesicle membrane. In terms of biological role, may play a central role in the functions mediated by specific classes of synaptic vesicles. This Tetronarce californica (Pacific electric ray) protein is Synaptic vesicle membrane protein VAT-1.